The chain runs to 176 residues: NAD(P)H-quinone oxidoreductase subunit 6, chloroplastic (176 aa).

5 consecutive transmembrane segments (helical) span residues 10–30 (ILLV…VLLT), 32–52 (PIYS…FHIP), 61–81 (AQLL…VMFM), 92–112 (LWTV…FSLI), and 152–172 (FYLP…GAIS).

The protein belongs to the complex I subunit 6 family. As to quaternary structure, NDH is composed of at least 16 different subunits, 5 of which are encoded in the nucleus.

It localises to the plastid. The protein resides in the chloroplast thylakoid membrane. The enzyme catalyses a plastoquinone + NADH + (n+1) H(+)(in) = a plastoquinol + NAD(+) + n H(+)(out). It carries out the reaction a plastoquinone + NADPH + (n+1) H(+)(in) = a plastoquinol + NADP(+) + n H(+)(out). In terms of biological role, NDH shuttles electrons from NAD(P)H:plastoquinone, via FMN and iron-sulfur (Fe-S) centers, to quinones in the photosynthetic chain and possibly in a chloroplast respiratory chain. The immediate electron acceptor for the enzyme in this species is believed to be plastoquinone. Couples the redox reaction to proton translocation, and thus conserves the redox energy in a proton gradient. This chain is NAD(P)H-quinone oxidoreductase subunit 6, chloroplastic (ndhG), found in Liriodendron tulipifera (Tuliptree).